A 148-amino-acid polypeptide reads, in one-letter code: ATP synthase epsilon chain (148 aa).

The protein belongs to the ATPase epsilon chain family. F-type ATPases have 2 components, CF(1) - the catalytic core - and CF(0) - the membrane proton channel. CF(1) has five subunits: alpha(3), beta(3), gamma(1), delta(1), epsilon(1). CF(0) has three main subunits: a, b and c.

It localises to the cell inner membrane. Its function is as follows. Produces ATP from ADP in the presence of a proton gradient across the membrane. The polypeptide is ATP synthase epsilon chain (Paracoccus denitrificans (strain Pd 1222)).